Reading from the N-terminus, the 316-residue chain is Porphobilinogen deaminase (316 aa).

Position 245 is an S-(dipyrrolylmethanemethyl)cysteine (Cys245).

Belongs to the HMBS family. Monomer. Dipyrromethane serves as cofactor.

It carries out the reaction 4 porphobilinogen + H2O = hydroxymethylbilane + 4 NH4(+). It functions in the pathway porphyrin-containing compound metabolism; protoporphyrin-IX biosynthesis; coproporphyrinogen-III from 5-aminolevulinate: step 2/4. The protein operates within porphyrin-containing compound metabolism; chlorophyll biosynthesis. In terms of biological role, tetrapolymerization of the monopyrrole PBG into the hydroxymethylbilane pre-uroporphyrinogen in several discrete steps. The chain is Porphobilinogen deaminase from Prochlorococcus marinus (strain MIT 9312).